The sequence spans 593 residues: Cytochrome c oxidase polypeptide 1 (593 aa).

The next 2 membrane-spanning stretches (helical) occupy residues Ala-5–Leu-25 and Ile-71–Leu-91. His-117 lines the Fe(II)-heme a pocket. Transmembrane regions (helical) follow at residues Leu-122–Ile-142, Ala-154–Pro-174, Gly-204–Phe-224, Gln-246–Leu-266, Leu-288–Val-308, and Leu-320–Val-340. Cu cation-binding residues include His-294 and Tyr-298. Residues His-294–Tyr-298 constitute a cross-link (1'-histidyl-3'-tyrosine (His-Tyr)). The Cu cation site is built by His-343 and His-344. 5 consecutive transmembrane segments (helical) span residues Phe-358–Thr-378, Phe-401–His-421, Tyr-425–Ala-445, Phe-467–Gly-487, and Leu-506–Ala-526. A heme a3-binding site is contributed by His-429. Fe(II)-heme a is bound at residue His-431. Residues Thr-562–Ser-593 form a disordered region.

Belongs to the heme-copper respiratory oxidase family.

The protein localises to the cell membrane. The catalysed reaction is 4 Fe(II)-[cytochrome c] + O2 + 8 H(+)(in) = 4 Fe(III)-[cytochrome c] + 2 H2O + 4 H(+)(out). It participates in energy metabolism; oxidative phosphorylation. Cytochrome c oxidase is the component of the respiratory chain that catalyzes the reduction of oxygen to water. Subunits 1-3 form the functional core of the enzyme complex. CO I is the catalytic subunit of the enzyme. Electrons originating in cytochrome c are transferred via the copper A center of subunit 2 and heme A of subunit 1 to the bimetallic center formed by heme A3 and copper B. This Halobacterium salinarum (strain ATCC 700922 / JCM 11081 / NRC-1) (Halobacterium halobium) protein is Cytochrome c oxidase polypeptide 1 (coxA2).